A 627-amino-acid polypeptide reads, in one-letter code: Phosphomethylpyrimidine synthase (627 aa).

Substrate-binding positions include asparagine 233, methionine 262, tyrosine 291, histidine 327, 347–349, 388–391, and glutamate 427; these read SRG and DGLR. Histidine 431 contributes to the Zn(2+) binding site. A substrate-binding site is contributed by tyrosine 454. A Zn(2+)-binding site is contributed by histidine 495. Residues cysteine 575, cysteine 578, and cysteine 583 each coordinate [4Fe-4S] cluster.

The protein belongs to the ThiC family. Homodimer. [4Fe-4S] cluster serves as cofactor.

It catalyses the reaction 5-amino-1-(5-phospho-beta-D-ribosyl)imidazole + S-adenosyl-L-methionine = 4-amino-2-methyl-5-(phosphooxymethyl)pyrimidine + CO + 5'-deoxyadenosine + formate + L-methionine + 3 H(+). It participates in cofactor biosynthesis; thiamine diphosphate biosynthesis. Catalyzes the synthesis of the hydroxymethylpyrimidine phosphate (HMP-P) moiety of thiamine from aminoimidazole ribotide (AIR) in a radical S-adenosyl-L-methionine (SAM)-dependent reaction. The chain is Phosphomethylpyrimidine synthase from Acidithiobacillus ferrooxidans (strain ATCC 23270 / DSM 14882 / CIP 104768 / NCIMB 8455) (Ferrobacillus ferrooxidans (strain ATCC 23270)).